Reading from the N-terminus, the 242-residue chain is N-glycosylase/DNA lyase (242 aa).

Residues Gln26, Ser53, and Trp64 each coordinate 8-oxoguanine. Residues Glu120–Ser184 form a helix-hairpin-helix region. Lys144 functions as the Schiff-base intermediate with DNA in the catalytic mechanism. 2 residues coordinate 8-oxoguanine: Phe148 and Pro174. The active site involves Asp176. 8-oxoguanine is bound by residues Asp210 and Trp214.

The protein belongs to the archaeal N-glycosylase/DNA lyase (AGOG) family.

It catalyses the reaction 2'-deoxyribonucleotide-(2'-deoxyribose 5'-phosphate)-2'-deoxyribonucleotide-DNA = a 3'-end 2'-deoxyribonucleotide-(2,3-dehydro-2,3-deoxyribose 5'-phosphate)-DNA + a 5'-end 5'-phospho-2'-deoxyribonucleoside-DNA + H(+). In terms of biological role, DNA repair enzyme that is part of the base excision repair (BER) pathway; protects from oxidative damage by removing the major product of DNA oxidation, 8-oxoguanine (GO), from single- and double-stranded DNA substrates. The chain is N-glycosylase/DNA lyase from Pyrococcus furiosus (strain ATCC 43587 / DSM 3638 / JCM 8422 / Vc1).